Here is a 316-residue protein sequence, read N- to C-terminus: Uracil-DNA glycosylase (316 aa).

The segment covering 36-79 (AAAAAPAGAGAGASKPARPSAAARPAKGTPAASAATTATGADAS) has biased composition (low complexity). Positions 36 to 91 (AAAAAPAGAGAGASKPARPSAAARPAKGTPAASAATTATGADASAPPPDPGAPTWD) are disordered. Catalysis depends on Asp-159, which acts as the Proton acceptor.

Belongs to the uracil-DNA glycosylase (UDG) superfamily. UNG family.

Its subcellular location is the host nucleus. It catalyses the reaction Hydrolyzes single-stranded DNA or mismatched double-stranded DNA and polynucleotides, releasing free uracil.. In terms of biological role, excises uracil residues from the DNA which can arise as a result of misincorporation of dUMP residues by DNA polymerase or deamination of cytosines. Therefore may reduce deleterious uracil incorporation into the viral genome, particularly in terminally differentiated cells which lack DNA repair enzymes. This Sus scrofa (Pig) protein is Uracil-DNA glycosylase (UL2).